The chain runs to 144 residues: Large ribosomal subunit protein uL15 (144 aa).

The interval 1–49 is disordered; it reads MIKLECLQDPSPRKRRTKLLGRGPSSGHGKTSSRGHKGDCSRSGYKRRF.

This sequence belongs to the universal ribosomal protein uL15 family. In terms of assembly, part of the 50S ribosomal subunit.

In terms of biological role, binds to the 23S rRNA. The chain is Large ribosomal subunit protein uL15 from Chlamydia trachomatis serovar A (strain ATCC VR-571B / DSM 19440 / HAR-13).